A 121-amino-acid chain; its full sequence is Small ribosomal subunit protein uS13 (121 aa).

Residues 93–121 (KGLPLRGQKTKTNARTRKGPKKTIANKKK) are disordered.

It belongs to the universal ribosomal protein uS13 family. In terms of assembly, part of the 30S ribosomal subunit. Forms a loose heterodimer with protein S19. Forms two bridges to the 50S subunit in the 70S ribosome.

In terms of biological role, located at the top of the head of the 30S subunit, it contacts several helices of the 16S rRNA. In the 70S ribosome it contacts the 23S rRNA (bridge B1a) and protein L5 of the 50S subunit (bridge B1b), connecting the 2 subunits; these bridges are implicated in subunit movement. Contacts the tRNAs in the A and P-sites. This is Small ribosomal subunit protein uS13 from Clostridium perfringens (strain ATCC 13124 / DSM 756 / JCM 1290 / NCIMB 6125 / NCTC 8237 / Type A).